Reading from the N-terminus, the 105-residue chain is Large ribosomal subunit protein bL21 (105 aa).

The protein belongs to the bacterial ribosomal protein bL21 family. Part of the 50S ribosomal subunit. Contacts protein L20.

Its function is as follows. This protein binds to 23S rRNA in the presence of protein L20. This is Large ribosomal subunit protein bL21 from Rickettsia prowazekii (strain Madrid E).